We begin with the raw amino-acid sequence, 185 residues long: Photosystem I assembly protein Ycf4 (185 aa).

The next 2 helical transmembrane spans lie at 22–42 (FFFA…GFSS) and 57–77 (IIFV…LFFS).

It belongs to the Ycf4 family.

The protein localises to the plastid. It localises to the chloroplast thylakoid membrane. Seems to be required for the assembly of the photosystem I complex. This chain is Photosystem I assembly protein Ycf4, found in Welwitschia mirabilis (Tree tumbo).